A 201-amino-acid chain; its full sequence is Cutinase (201 aa).

Residues 1 to 20 form the signal peptide; that stretch reads MKTSAQQLLSLLLLPLSAIA. C31 and C105 form a disulfide bridge. S116 (nucleophile) is an active-site residue. C164 and C171 are oxidised to a cystine. D168 is an active-site residue. H181 serves as the catalytic Proton donor/acceptor.

Belongs to the cutinase family. The 2 disulfide bonds play a critical role in holding the catalytic residues in juxta-position; reduction of the disulfide bridges results in the complete inactivation of the enzyme.

It is found in the secreted. It carries out the reaction cutin + H2O = cutin monomers.. In terms of biological role, catalyzes the hydrolysis of complex carboxylic polyesters found in the cell wall of plants. Degrades cutin, a macromolecule that forms the structure of the plant cuticle. Allows pathogenic fungi to penetrate through the cuticular barrier into the host plant during the initial stage of fungal infection. The sequence is that of Cutinase (CUT1) from Monilinia fructicola (Brown rot fungus).